The following is an 85-amino-acid chain: UPF0386 protein Atu1321 (85 aa).

The protein belongs to the UPF0386 family.

In Agrobacterium fabrum (strain C58 / ATCC 33970) (Agrobacterium tumefaciens (strain C58)), this protein is UPF0386 protein Atu1321.